The sequence spans 422 residues: Solute carrier family 35 member D3 (422 aa).

10 helical membrane-spanning segments follow: residues 9-29, 38-58, 64-84, 103-123, 131-151, 155-175, 187-207, 224-244, 257-277, and 280-300; these read VLGI…NILL, FSFL…SLEL, LIAV…VAVL, MYVV…VLVL, GVLA…AGDL, PIGY…LVLI, LTAQ…CSFA, AMVS…FTTL, FVGV…FSDV, and TSLF…YCVA. Residues 339–365 are disordered; the sequence is AKSGNSEPESAEGAGDSVQQGGQESRG. Residues 355–364 are compositionally biased toward polar residues; the sequence is SVQQGGQESR.

It belongs to the TPT transporter family. SLC35D subfamily. As to quaternary structure, could interact with ATG14, BECN1 and PIK3C3 that form the PI3KC3-C1/AIC/autophagy initiation complex; enhancing the formation of the AIC and promoting autophagy. In terms of tissue distribution, expressed in brain. Expressed in subsets of dopaminergic neurons. Expressed in maturing megakaryocytes.

It is found in the cytoplasmic vesicle. The protein localises to the secretory vesicle. It localises to the synaptic vesicle membrane. Its subcellular location is the early endosome membrane. The protein resides in the endoplasmic reticulum membrane. It catalyses the reaction UDP-alpha-D-glucose(in) = UDP-alpha-D-glucose(out). Its activity is regulated as follows. Inhibited by proton uncouplers that directly abolish the proton electrochemical gradient. In terms of biological role, probable UDP-glucose transmembrane transporter involved in UDP-glucose transport from the cytosol to the lumen of synaptic vesicles. It is involved in platelet dense granules maturation. Alternatively, could function as a molecular adapter enhancing the formation of the PI3KC3-C1/AIC/autophagy initiation complex to promote autophagy in dopaminergic neurons. Could also regulate the plasma membrane localization of the D(1A) dopamine receptor/DRD1 and dopamine signaling. This chain is Solute carrier family 35 member D3, found in Mus musculus (Mouse).